We begin with the raw amino-acid sequence, 284 residues long: Sulfotransferase 2A6 (284 aa).

Position 43–48 (K43–W48) interacts with 3'-phosphoadenylyl sulfate. The Proton acceptor role is filled by H98. 3'-phosphoadenylyl sulfate is bound by residues R120, S128, Y183, S217–M222, and R246–G248.

It belongs to the sulfotransferase 1 family. Oligomer. In terms of tissue distribution, liver, exhibiting a sex-dependent spatial localization in the lobule of the liver.

Its subcellular location is the cytoplasm. The protein resides in the cytosol. It catalyses the reaction an alcohol + 3'-phosphoadenylyl sulfate = an alkyl sulfate + adenosine 3',5'-bisphosphate + H(+). The enzyme catalyses glycolithocholate + 3'-phosphoadenylyl sulfate = sulfoglycolithocholate + adenosine 3',5'-bisphosphate + H(+). It carries out the reaction taurolithocholate + 3'-phosphoadenylyl sulfate = taurolithocholate 3-sulfate + adenosine 3',5'-bisphosphate + H(+). The catalysed reaction is 3beta-hydroxyandrost-5-en-17-one + 3'-phosphoadenylyl sulfate = dehydroepiandrosterone 3-sulfate + adenosine 3',5'-bisphosphate + H(+). It catalyses the reaction 3beta-hydroxy-5-cholenate + 3'-phosphoadenylyl sulfate = 3beta-sulfo-5-cholenate + adenosine 3',5'-bisphosphate + H(+). The enzyme catalyses deoxycholate + 3'-phosphoadenylyl sulfate = 3alpha-sulfodeoxycholate + adenosine 3',5'-bisphosphate + H(+). It carries out the reaction glycodeoxycholate + 3'-phosphoadenylyl sulfate = 3alpha-sulfoglycodeoxycholate + adenosine 3',5'-bisphosphate + H(+). The catalysed reaction is taurodeoxycholate + 3'-phosphoadenylyl sulfate = 3alpha-sulfotaurodeoxycholate + adenosine 3',5'-bisphosphate + H(+). Its function is as follows. Sulfotransferase that utilizes 3'-phospho-5'-adenylyl sulfate (PAPS) as sulfonate donor to catalyze the sulfonation of the hydroxyl group of hydroxysteroids and bile acids. Prefered substrates are dehydroepiandrosterone (DHEA, also known as 3beta-hydroxyandrost-5-en-17-one) and 3beta-hydroxy-5-cholenoate, but can also catalyze deoxycholate and its conjugates, and lithocholate conjugates, in vitro. The protein is Sulfotransferase 2A6 of Rattus norvegicus (Rat).